The following is a 346-amino-acid chain: Biotin synthase (346 aa).

In terms of domain architecture, Radical SAM core spans 41–265; sequence NEVQISTLLS…MMPHSYVRLS (225 aa). 3 residues coordinate [4Fe-4S] cluster: Cys56, Cys60, and Cys63. The [2Fe-2S] cluster site is built by Cys100, Cys131, Cys191, and Arg263.

Belongs to the radical SAM superfamily. Biotin synthase family. As to quaternary structure, homodimer. It depends on [4Fe-4S] cluster as a cofactor. The cofactor is [2Fe-2S] cluster.

The enzyme catalyses (4R,5S)-dethiobiotin + (sulfur carrier)-SH + 2 reduced [2Fe-2S]-[ferredoxin] + 2 S-adenosyl-L-methionine = (sulfur carrier)-H + biotin + 2 5'-deoxyadenosine + 2 L-methionine + 2 oxidized [2Fe-2S]-[ferredoxin]. It functions in the pathway cofactor biosynthesis; biotin biosynthesis; biotin from 7,8-diaminononanoate: step 2/2. Its function is as follows. Catalyzes the conversion of dethiobiotin (DTB) to biotin by the insertion of a sulfur atom into dethiobiotin via a radical-based mechanism. The sequence is that of Biotin synthase from Pseudoalteromonas translucida (strain TAC 125).